The following is a 179-amino-acid chain: Large ribosomal subunit protein uL5 (179 aa).

This sequence belongs to the universal ribosomal protein uL5 family. Part of the 50S ribosomal subunit; part of the 5S rRNA/L5/L18/L25 subcomplex. Contacts the 5S rRNA and the P site tRNA. Forms a bridge to the 30S subunit in the 70S ribosome.

Functionally, this is one of the proteins that bind and probably mediate the attachment of the 5S RNA into the large ribosomal subunit, where it forms part of the central protuberance. In the 70S ribosome it contacts protein S13 of the 30S subunit (bridge B1b), connecting the 2 subunits; this bridge is implicated in subunit movement. Contacts the P site tRNA; the 5S rRNA and some of its associated proteins might help stabilize positioning of ribosome-bound tRNAs. The chain is Large ribosomal subunit protein uL5 from Shewanella amazonensis (strain ATCC BAA-1098 / SB2B).